Here is a 95-residue protein sequence, read N- to C-terminus: UPF0358 protein BCE_3996 (95 aa).

The protein belongs to the UPF0358 family.

The sequence is that of UPF0358 protein BCE_3996 from Bacillus cereus (strain ATCC 10987 / NRS 248).